Reading from the N-terminus, the 234-residue chain is OVARIAN TUMOR DOMAIN-containing deubiquitinating enzyme 3 (234 aa).

Residues 76-234 enclose the OTU domain; sequence YAVDRVKGDG…SGRNHYDLLR (159 aa). The interval 81-87 is cys-loop; that stretch reads VKGDGRC. The active site involves aspartate 84. Residue cysteine 87 is the Nucleophile of the active site. Positions 154–164 are variable-loop; the sequence is IGRHDFWGGES. Positions 224-229 are his-loop; the sequence is YSGRNH. Residue histidine 229 is part of the active site.

Belongs to the peptidase C85 family.

The catalysed reaction is Thiol-dependent hydrolysis of ester, thioester, amide, peptide and isopeptide bonds formed by the C-terminal Gly of ubiquitin (a 76-residue protein attached to proteins as an intracellular targeting signal).. In terms of biological role, hydrolase that can remove conjugated ubiquitin from proteins in vitro and may therefore play an important regulatory role at the level of protein turnover by preventing degradation. Cysteine protease with a preference for 'Lys-63' over 'Lys-48' over 'Met-1' -linked ubiquitin (UB) tetramers (e.g. Ub3 and Ub4) as substrates. Also cleaves RUB-GST fusion. The chain is OVARIAN TUMOR DOMAIN-containing deubiquitinating enzyme 3 from Arabidopsis thaliana (Mouse-ear cress).